Here is a 216-residue protein sequence, read N- to C-terminus: Imidazole glycerol phosphate synthase subunit HisH (216 aa).

One can recognise a Glutamine amidotransferase type-1 domain in the interval 2–216 (RVAIIDYGSG…LISNFLRWKP (215 aa)). Residue Cys88 is the Nucleophile of the active site. Catalysis depends on residues His196 and Glu198.

In terms of assembly, heterodimer of HisH and HisF.

It localises to the cytoplasm. It carries out the reaction 5-[(5-phospho-1-deoxy-D-ribulos-1-ylimino)methylamino]-1-(5-phospho-beta-D-ribosyl)imidazole-4-carboxamide + L-glutamine = D-erythro-1-(imidazol-4-yl)glycerol 3-phosphate + 5-amino-1-(5-phospho-beta-D-ribosyl)imidazole-4-carboxamide + L-glutamate + H(+). It catalyses the reaction L-glutamine + H2O = L-glutamate + NH4(+). Its pathway is amino-acid biosynthesis; L-histidine biosynthesis; L-histidine from 5-phospho-alpha-D-ribose 1-diphosphate: step 5/9. Its function is as follows. IGPS catalyzes the conversion of PRFAR and glutamine to IGP, AICAR and glutamate. The HisH subunit catalyzes the hydrolysis of glutamine to glutamate and ammonia as part of the synthesis of IGP and AICAR. The resulting ammonia molecule is channeled to the active site of HisF. In Rhizobium meliloti (strain 1021) (Ensifer meliloti), this protein is Imidazole glycerol phosphate synthase subunit HisH.